Consider the following 150-residue polypeptide: Small heat shock protein HspE (150 aa).

The 111-residue stretch at 27 to 137 folds into the sHSP domain; that stretch reads VDNGDTYPPY…KPRQIAIDVA (111 aa).

This sequence belongs to the small heat shock protein (HSP20) family.

The sequence is that of Small heat shock protein HspE (hspE) from Bradyrhizobium diazoefficiens (strain JCM 10833 / BCRC 13528 / IAM 13628 / NBRC 14792 / USDA 110).